Reading from the N-terminus, the 302-residue chain is Dehydrodolichyl diphosphate synthase 3 (302 aa).

This sequence belongs to the UPP synthase family. The cofactor is Mg(2+).

Its pathway is protein modification; protein glycosylation. Its function is as follows. Catalyzes cis-prenyl chain elongation to produce the polyprenyl backbone of dolichol, a glycosyl carrier-lipid required for the biosynthesis of several classes of glycoprotein. The polypeptide is Dehydrodolichyl diphosphate synthase 3 (Arabidopsis thaliana (Mouse-ear cress)).